The sequence spans 756 residues: ATP-dependent DNA helicase Hel308 (756 aa).

Residues Q29 and 47 to 54 (SATASGKT) contribute to the ATP site. Residues 34 to 201 (RAGLLNGENI…WLNAKLVKSD (168 aa)) form the Helicase ATP-binding domain. The DEAH box motif lies at 146 to 149 (DEIH). The Helicase C-terminal domain occupies 233–435 (SLINLTVDTL…PTSLKFHTLS (203 aa)).

It belongs to the helicase family. Hel308 subfamily. Monomer.

The catalysed reaction is Couples ATP hydrolysis with the unwinding of duplex DNA by translocating in the 3'-5' direction.. It catalyses the reaction ATP + H2O = ADP + phosphate + H(+). DNA-dependent ATPase and 3'-5' DNA helicase that may be involved in repair of stalled replication forks. The protein is ATP-dependent DNA helicase Hel308 of Caldivirga maquilingensis (strain ATCC 700844 / DSM 13496 / JCM 10307 / IC-167).